Reading from the N-terminus, the 436-residue chain is UPF0597 protein YhaM (436 aa).

Belongs to the UPF0597 family.

The chain is UPF0597 protein YhaM from Salmonella dublin (strain CT_02021853).